A 722-amino-acid polypeptide reads, in one-letter code: Neprilysin-1 (722 aa).

The N-terminal stretch at methionine 1–alanine 17 is a signal peptide. Residues valine 32–tryptophan 722 form the Peptidase M13 domain. Disulfide bonds link cysteine 33–cysteine 38, cysteine 56–cysteine 707, cysteine 64–cysteine 667, cysteine 120–cysteine 378, and cysteine 589–cysteine 719. N-linked (GlcNAc...) asparagine glycosylation is found at asparagine 100, asparagine 184, asparagine 207, and asparagine 424. Histidine 552 is a binding site for Zn(2+). The active site involves glutamate 553. Position 556 (histidine 556) interacts with Zn(2+). Asparagine 609 carries N-linked (GlcNAc...) asparagine glycosylation. Glutamate 614 is a binding site for Zn(2+). Catalysis depends on aspartate 618, which acts as the Proton donor.

This sequence belongs to the peptidase M13 family. Requires Zn(2+) as cofactor. In terms of processing, contains 5 disulfide bonds. In terms of tissue distribution, expressed by the venom gland.

It localises to the secreted. This chain is Neprilysin-1, found in Trittame loki (Brush-footed trapdoor spider).